We begin with the raw amino-acid sequence, 155 residues long: uncharacterized protein (155 aa).

The next 2 membrane-spanning stretches (helical) occupy residues 33–53 (ITLLPIAGYYSLRLLLVLFLL) and 83–103 (IGAVITAAVVWVTLLAIGIWV).

The protein to E.coli YdgK.

It is found in the cell membrane. This is an uncharacterized protein from Synechocystis sp. (strain ATCC 27184 / PCC 6803 / Kazusa).